Consider the following 666-residue polypeptide: Frizzled-3 (666 aa).

The signal sequence occupies residues 1-22; that stretch reads MAMTWIVFSLWPLTVFMGHIGG. Residues 23–136 enclose the FZ domain; sequence HSLFSCEPIT…CSRFPDCDEP (114 aa). Over 23-205 the chain is Extracellular; sequence HSLFSCEPIT…REELSFARYF (183 aa). 5 disulfides stabilise this stretch: Cys-28/Cys-89, Cys-36/Cys-82, Cys-73/Cys-110, Cys-99/Cys-133, and Cys-103/Cys-127. A glycan (N-linked (GlcNAc...) asparagine) is linked at Asn-42. The helical transmembrane segment at 206-226 threads the bilayer; the sequence is IGLISIICLSATLFTFLTFLI. The Cytoplasmic portion of the chain corresponds to 227–237; sequence DVTRFRYPERP. A helical membrane pass occupies residues 238–258; it reads IIFYAVCYMMVSLIFFIGFLL. Residues 259-288 lie on the Extracellular side of the membrane; the sequence is EDRVACNASIPAQYKASTVTQGSHNKACTM. N-linked (GlcNAc...) asparagine glycosylation is present at Asn-265. Residues 289 to 309 traverse the membrane as a helical segment; it reads LFMILYFFTMAGSVWWVILTI. Over 310-328 the chain is Cytoplasmic; that stretch reads TWFLAAVPKWGSEAIEKKA. The helical transmembrane segment at 329–349 threads the bilayer; the sequence is LLFHASAWGIPGTLTIILLAM. Over 350–374 the chain is Extracellular; that stretch reads NKIEGDNISGVCFVGLYDVDALRYF. An N-linked (GlcNAc...) asparagine glycan is attached at Asn-356. The helical transmembrane segment at 375–395 threads the bilayer; it reads VLAPLCLYVVVGVSLLLAGII. Topologically, residues 396-420 are cytoplasmic; sequence SLNRVRIEIPLEKENQDKLVKFMIR. A helical membrane pass occupies residues 421–441; that stretch reads IGVFSILYLVPLLVVIGCYFY. At 442–477 the chain is on the extracellular side; that stretch reads EQAYRGIWETTWIQERCREYHIPCPYQVTQMSRPDL. The helical transmembrane segment at 478-498 threads the bilayer; sequence ILFLMKYLMALIVGIPSVFWV. At 499 to 666 the chain is on the cytoplasmic side; the sequence is GSKKTCFEWA…RVIEEDGTSA (168 aa). The Lys-Thr-X-X-X-Trp motif, mediates interaction with the PDZ domain of Dvl family members motif lies at 502 to 507; it reads KTCFEW. Residues 538–666 are disordered; the sequence is RDPNTPIIRK…RVIEEDGTSA (129 aa). Over residues 550–565 the composition is skewed to polar residues; that stretch reads GTSTQGTSTHASSTQL. Basic and acidic residues predominate over residues 617 to 638; it reads LTDHSRHSSSHRLNEQSRHSSI. The span at 639–656 shows a compositional bias: polar residues; that stretch reads RDLSNNPMTHITHGTSMN.

This sequence belongs to the G-protein coupled receptor Fz/Smo family. As to quaternary structure, interacts with VANGL2. Post-translationally, ubiquitinated by ZNRF3, leading to its degradation by the proteasome. As to expression, widely expressed. Relatively high expression in the CNS, including regions of the limbic system, in kidney, pancreas, skeletal muscle, uterus and testis.

The protein localises to the membrane. It is found in the cell membrane. The protein resides in the cell surface. Its subcellular location is the apical cell membrane. Receptor for Wnt proteins. Most of frizzled receptors are coupled to the beta-catenin canonical signaling pathway, which leads to the activation of disheveled proteins, inhibition of GSK-3 kinase, nuclear accumulation of beta-catenin and activation of Wnt target genes. A second signaling pathway involving PKC and calcium fluxes has been seen for some family members, but it is not yet clear if it represents a distinct pathway or if it can be integrated in the canonical pathway, as PKC seems to be required for Wnt-mediated inactivation of GSK-3 kinase. Both pathways seem to involve interactions with G-proteins. Activation by Wnt5A stimulates PKC activity via a G-protein-dependent mechanism. Involved in transduction and intercellular transmission of polarity information during tissue morphogenesis and/or in differentiated tissues. Plays a role in controlling early axon growth and guidance processes necessary for the formation of a subset of central and peripheral major fiber tracts. Required for the development of major fiber tracts in the central nervous system, including: the anterior commissure, the corpus callosum, the thalamocortical, corticothalamic and nigrostriatal tracts, the corticospinal tract, the fasciculus retroflexus, the mammillothalamic tract, the medial lemniscus, and ascending fiber tracts from the spinal cord to the brain. In the peripheral nervous system, controls axon growth in distinct populations of cranial and spinal motor neurons, including the facial branchimotor nerve, the hypoglossal nerve, the phrenic nerve, and motor nerves innervating dorsal limbs. Involved in the migration of cranial neural crest cells. May also be implicated in the transmission of sensory information from the trunk and limbs to the brain. Controls commissural sensory axons guidance after midline crossing along the anterior-posterior axis in the developing spinal cord in a Wnt-dependent signaling pathway. Together with FZD6, is involved in the neural tube closure and plays a role in the regulation of the establishment of planar cell polarity (PCP), particularly in the orientation of asymmetric bundles of stereocilia on the apical faces of a subset of auditory and vestibular sensory cells located in the inner ear. Promotes neurogenesis by maintaining sympathetic neuroblasts within the cell cycle in a beta-catenin-dependent manner. This Homo sapiens (Human) protein is Frizzled-3 (FZD3).